Here is a 278-residue protein sequence, read N- to C-terminus: Large ribosomal subunit protein uL2 (278 aa).

Positions 212-278 (NRHRGIRPQT…IISRKKHKKG (67 aa)) are disordered. The segment covering 257 to 278 (YKTRKKKASDKLIISRKKHKKG) has biased composition (basic residues).

Belongs to the universal ribosomal protein uL2 family. Part of the 50S ribosomal subunit. Forms a bridge to the 30S subunit in the 70S ribosome.

In terms of biological role, one of the primary rRNA binding proteins. Required for association of the 30S and 50S subunits to form the 70S ribosome, for tRNA binding and peptide bond formation. It has been suggested to have peptidyltransferase activity; this is somewhat controversial. Makes several contacts with the 16S rRNA in the 70S ribosome. The sequence is that of Large ribosomal subunit protein uL2 from Helicobacter pylori (strain Shi470).